The following is a 211-amino-acid chain: Endonuclease V (211 aa).

Mg(2+)-binding residues include aspartate 37 and aspartate 102.

It belongs to the endonuclease V family. Mg(2+) serves as cofactor.

It localises to the cytoplasm. The catalysed reaction is Endonucleolytic cleavage at apurinic or apyrimidinic sites to products with a 5'-phosphate.. Its function is as follows. DNA repair enzyme involved in the repair of deaminated bases. Selectively cleaves double-stranded DNA at the second phosphodiester bond 3' to a deoxyinosine leaving behind the intact lesion on the nicked DNA. This Ignicoccus hospitalis (strain KIN4/I / DSM 18386 / JCM 14125) protein is Endonuclease V.